The chain runs to 215 residues: Pyrrolidone-carboxylate peptidase (215 aa).

Residues E80, C143, and H167 contribute to the active site.

The protein belongs to the peptidase C15 family. As to quaternary structure, homotetramer.

The protein resides in the cytoplasm. The enzyme catalyses Release of an N-terminal pyroglutamyl group from a polypeptide, the second amino acid generally not being Pro.. In terms of biological role, removes 5-oxoproline from various penultimate amino acid residues except L-proline. This is Pyrrolidone-carboxylate peptidase from Pectobacterium carotovorum subsp. carotovorum (strain PC1).